We begin with the raw amino-acid sequence, 278 residues long: 4-deoxy-L-threo-5-hexosulose-uronate ketol-isomerase (278 aa).

The Zn(2+) site is built by histidine 196, histidine 198, glutamate 203, and histidine 245.

Belongs to the KduI family. The cofactor is Zn(2+).

The catalysed reaction is 5-dehydro-4-deoxy-D-glucuronate = 3-deoxy-D-glycero-2,5-hexodiulosonate. It participates in glycan metabolism; pectin degradation; 2-dehydro-3-deoxy-D-gluconate from pectin: step 4/5. Its function is as follows. Catalyzes the isomerization of 5-dehydro-4-deoxy-D-glucuronate to 3-deoxy-D-glycero-2,5-hexodiulosonate. This chain is 4-deoxy-L-threo-5-hexosulose-uronate ketol-isomerase, found in Enterobacter sp. (strain 638).